We begin with the raw amino-acid sequence, 139 residues long: MKKTKLLNASLSHYIATLGHTDSLVICDAGLPISNQVERVDLALEAGVPGFLQTVDVVISEMFVEHAVVAKEIREKNPQIHDALLDSLRKLSEQQGNCIAVEYVEHEEFKVLSSESKAAVRTGEFSPYANIILYSGVPF.

Histidine 20 serves as the catalytic Proton donor. Residues aspartate 28, histidine 106, and 128–130 (YAN) contribute to the substrate site.

The protein belongs to the RbsD / FucU family. RbsD subfamily. Homodecamer.

Its subcellular location is the cytoplasm. The catalysed reaction is beta-D-ribopyranose = beta-D-ribofuranose. It participates in carbohydrate metabolism; D-ribose degradation; D-ribose 5-phosphate from beta-D-ribopyranose: step 1/2. Catalyzes the interconversion of beta-pyran and beta-furan forms of D-ribose. The sequence is that of D-ribose pyranase from Histophilus somni (strain 2336) (Haemophilus somnus).